The sequence spans 528 residues: Nucleobase-ascorbate transporter 5 (528 aa).

Residues 1–20 are disordered; that stretch reads MSAPKSGGDPLPHPPKEQLP. The next 12 helical transmembrane spans lie at 35–55, 71–91, 93–113, 133–153, 159–179, 181–201, 219–239, 285–305, 367–387, 390–410, 418–438, and 460–479; these read AVLL…LIPS, LIQT…VFGT, LPAV…IMLS, TQGA…SGLW, FLSP…LYEL, FPGV…LILI, FAVI…TLGG, FAMM…FIAV, AGFM…ASIP, IIAA…LSLL, FRTL…PQYF, and MVNV…AYLL.

This sequence belongs to the nucleobase:cation symporter-2 (NCS2) (TC 2.A.40) family. In terms of tissue distribution, weakly expressed in the vasculature of developing leaves.

It localises to the membrane. This is Nucleobase-ascorbate transporter 5 (NAT5) from Arabidopsis thaliana (Mouse-ear cress).